Here is a 360-residue protein sequence, read N- to C-terminus: MKKLLALAVIAPLLISCSSSTKKGETYNEAWVKDTNGFDILMGQFANNIENLWGYKEVLIAGPKDYVKYTDQFQTRSHINFDDGTITVETIAGTEPTAHLRRAIIKTLLMGDDPTSVDLYSDVDDIKISKEPFLYGQVLDNTGQPIRWEGRATTFADYLLKTRLKSRSNGLRIIYSVTINLVPNHLDKRAHKYIGMVRQASRKYGVDESLILAIMQTESSFNPYAVSHADALGLMQVVQHSAGKDVFRSQGKSGTPSRNFLFDPASNIDTGTAYLAMLNNVYLSGIENPTSRRYAVITAYNGGAGSVLRVFSNDKIQAANMINRMSPGDVYQILTTRHPSAESRRYLYKVNSAQRSYRRR.

A signal peptide spans 1–16 (MKKLLALAVIAPLLIS). Residue cysteine 17 is the site of N-palmitoyl cysteine attachment. The S-diacylglycerol cysteine moiety is linked to residue cysteine 17.

Belongs to the transglycosylase Slt family.

It localises to the cell outer membrane. The catalysed reaction is Exolytic cleavage of the (1-&gt;4)-beta-glycosidic linkage between N-acetylmuramic acid (MurNAc) and N-acetylglucosamine (GlcNAc) residues in peptidoglycan, from either the reducing or the non-reducing ends of the peptidoglycan chains, with concomitant formation of a 1,6-anhydrobond in the MurNAc residue.. In terms of biological role, murein-degrading enzyme. May play a role in recycling of muropeptides during cell elongation and/or cell division. This is Membrane-bound lytic murein transglycosylase C from Salmonella paratyphi A (strain ATCC 9150 / SARB42).